The chain runs to 1009 residues: Dihydropyrimidine dehydrogenase [NADP(+)] (1009 aa).

Positions 69-99 (RGALFESARCLKCADAPCQKGCPTQLDIKSF) constitute a 4Fe-4S ferredoxin-type 1 domain. The [4Fe-4S] cluster site is built by cysteine 78, cysteine 81, cysteine 86, and cysteine 90. Valine 128 lines the FAD pocket. 4 residues coordinate [4Fe-4S] cluster: cysteine 129, cysteine 135, cysteine 139, and glutamine 155. Residues 193-197 (GCGPT), 217-225 (EKEQYLGGL), arginine 234, and leucine 260 contribute to the FAD site. NADP(+) is bound by residues 339–342 (AGDT), 363–364 (RR), arginine 370, 436–438 (AFG), and 479–484 (DLVGNG). Residue 478 to 486 (GDLVGNGTT) coordinates FAD. Residues serine 548 and 572–573 (KT) each bind FMN. Residues asparagine 607 and 666–668 (NLS) contribute to the substrate site. Cysteine 669 serves as the catalytic Proton acceptor. Lysine 707 serves as a coordination point for FMN. A substrate-binding site is contributed by 734 to 735 (NT). FMN contacts are provided by residues glycine 765, 791-793 (TGG), and 814-815 (CS). 2 4Fe-4S ferredoxin-type domains span residues 932-964 (VVALIDEDKCINCGKCYMTCNDSGYQAIKFDGK) and 965-995 (THIPLVTDLCTGCDLCLSVCPVPDCITMVPR). Positions 941, 944, 947, 951, 974, 977, 980, and 984 each coordinate [4Fe-4S] cluster.

The protein belongs to the dihydropyrimidine dehydrogenase family. Homodimer. [4Fe-4S] cluster is required as a cofactor. It depends on FAD as a cofactor. FMN serves as cofactor.

The protein localises to the cytoplasm. The enzyme catalyses 5,6-dihydrouracil + NADP(+) = uracil + NADPH + H(+). Its pathway is amino-acid biosynthesis; beta-alanine biosynthesis. Involved in pyrimidine base degradation. Catalyzes the reduction of uracil and thymine. In Dictyostelium discoideum (Social amoeba), this protein is Dihydropyrimidine dehydrogenase [NADP(+)] (pyd1).